The sequence spans 205 residues: Metalloproteinase inhibitor 1 (205 aa).

The signal sequence occupies residues 1–24 (MMAPFASLASGILLLLSLIASSKA). Cysteine 25 contacts Zn(2+). An involved in metalloproteinase-binding region spans residues 25 to 28 (CSCA). Cystine bridges form between cysteine 25–cysteine 94, cysteine 27–cysteine 123, cysteine 37–cysteine 148, cysteine 151–cysteine 197, cysteine 156–cysteine 161, and cysteine 169–cysteine 189. In terms of domain architecture, NTR spans 25-148 (CSCAPPHPQT…AFSKTYSAGC (124 aa)). A glycan (N-linked (GlcNAc...) asparagine) is linked at asparagine 54. Residues 91–92 (ES) are involved in metalloproteinase-binding. A glycan (N-linked (GlcNAc...) asparagine) is linked at asparagine 102. Position 179 is a phosphoserine (serine 179).

The protein belongs to the protease inhibitor I35 (TIMP) family. As to quaternary structure, interacts with MMP1, MMP3, MMP10 and MMP13, but has only very low affinity for MMP14. Interacts with CD63; identified in a complex with CD63 and ITGB1. Post-translationally, the activity of TIMP1 is dependent on the presence of disulfide bonds. In terms of processing, N-glycosylated. As to expression, found in fetal and adult tissues. Highest levels are found in bone. Also found in lung, ovary and uterus.

The protein resides in the secreted. Its function is as follows. Metalloproteinase inhibitor that functions by forming one to one complexes with target metalloproteinases, such as collagenases, and irreversibly inactivates them by binding to their catalytic zinc cofactor. Acts on MMP1, MMP2, MMP3, MMP7, MMP8, MMP9, MMP10, MMP11, MMP12, MMP13 and MMP16. Does not act on MMP14. Also functions as a growth factor that regulates cell differentiation, migration and cell death and activates cellular signaling cascades via CD63 and ITGB1. Plays a role in integrin signaling. The protein is Metalloproteinase inhibitor 1 (Timp1) of Mus musculus (Mouse).